The sequence spans 421 residues: Large ribosomal subunit protein uL4 (421 aa).

Position 2 is an N-acetylalanine (alanine 2). Lysine 14 is subject to N6-acetyllysine. The residue at position 97 (arginine 97) is an Omega-N-methylarginine. Residue lysine 106 is modified to N6-acetyllysine. A Glycyl lysine isopeptide (Lys-Gly) (interchain with G-Cter in SUMO2) cross-link involves residue lysine 239. Residue lysine 259 is modified to N6-acetyllysine. Threonine 266 bears the Phosphothreonine mark. 2 positions are modified to phosphoserine: serine 290 and serine 295. Arginine 300 bears the Citrulline mark. Lysine 327 participates in a covalent cross-link: Glycyl lysine isopeptide (Lys-Gly) (interchain with G-Cter in SUMO2). Residues lysine 333 and lysine 353 each carry the N6-acetyllysine modification. Lysine 364 carries the post-translational modification N6-acetyllysine; alternate. Lysine 364 is covalently cross-linked (Glycyl lysine isopeptide (Lys-Gly) (interchain with G-Cter in SUMO1); alternate). Position 365 is a phosphoserine (serine 365). Basic and acidic residues predominate over residues serine 365–proline 379. The disordered stretch occupies residues serine 365–alanine 421. Basic residues predominate over residues lysine 393–threonine 404. Basic and acidic residues predominate over residues lysine 406–alanine 421.

It belongs to the universal ribosomal protein uL4 family. In terms of assembly, component of the large ribosomal subunit. May bind IPO9 with low affinity. Interacts with RBM3. In terms of processing, citrullinated by PADI4.

It localises to the cytoplasm. Functionally, component of the large ribosomal subunit. The ribosome is a large ribonucleoprotein complex responsible for the synthesis of proteins in the cell. This chain is Large ribosomal subunit protein uL4 (Rpl4), found in Rattus norvegicus (Rat).